The primary structure comprises 148 residues: Nucleoside diphosphate kinase 1 (148 aa).

6 residues coordinate ATP: Lys9, Phe57, Arg85, Thr91, Arg102, and Asn112. His115 acts as the Pros-phosphohistidine intermediate in catalysis.

It belongs to the NDK family. It depends on Mg(2+) as a cofactor. The N-terminus is blocked.

It catalyses the reaction a 2'-deoxyribonucleoside 5'-diphosphate + ATP = a 2'-deoxyribonucleoside 5'-triphosphate + ADP. The enzyme catalyses a ribonucleoside 5'-diphosphate + ATP = a ribonucleoside 5'-triphosphate + ADP. Major role in the synthesis of nucleoside triphosphates other than ATP. The ATP gamma phosphate is transferred to the NDP beta phosphate via a ping-pong mechanism, using a phosphorylated active-site intermediate. The chain is Nucleoside diphosphate kinase 1 (NDPK1) from Spinacia oleracea (Spinach).